A 282-amino-acid polypeptide reads, in one-letter code: HTH-type transcriptional activator RhaR (282 aa).

An HTH araC/xylS-type domain is found at D179–L277. 2 consecutive DNA-binding regions (H-T-H motif) follow at residues D196–T217 and I244–T267.

Binds DNA as a dimer.

It localises to the cytoplasm. In terms of biological role, activates expression of the rhaSR operon in response to L-rhamnose. The chain is HTH-type transcriptional activator RhaR from Escherichia coli O1:K1 / APEC.